A 208-amino-acid chain; its full sequence is MIIKHFFGTVLVLLASTTIFSLDLKLIIFQQRQVNQESLKLLNKLQTLSIQQCLPHRKNFLLPQKSLSPQQYQKGHTLAILHEMLQQIFSLFRANISLDGWEENHTEKFLIQLHQQLEYLEALMGLEAEKLSGTLGSDNLRLQVKMYFRRIHDYLENQDYSTCAWAIVQVEISRCLFFVFSLTEKLSKQGRPLNDMKQELTTEFRSPR.

The signal sequence occupies residues 1–21 (MIIKHFFGTVLVLLASTTIFS). An intrachain disulfide couples cysteine 53 to cysteine 163. Asparagine 95 and asparagine 104 each carry an N-linked (GlcNAc...) asparagine glycan.

This sequence belongs to the alpha/beta interferon family. Endometrium-specific.

It localises to the secreted. Functionally, type I interferon required for maintaining basal levels of IFN-regulated genes, including 2'-5'-oligoadenylate synthetase, IRF7 and ISG15, in the female reproductive tract. Directly mediates protection against viral and bacterial genital infections. This Homo sapiens (Human) protein is Interferon epsilon (IFNE).